A 489-amino-acid chain; its full sequence is Betaine aldehyde dehydrogenase (489 aa).

Positions 26 and 93 each coordinate K(+). NAD(+) is bound at residue 150-152 (GAW). Lysine 162 functions as the Charge relay system in the catalytic mechanism. NAD(+) is bound at residue 176 to 179 (KPSE). Valine 180 is a K(+) binding site. 229 to 232 (GVET) contacts NAD(+). Residue leucine 245 coordinates K(+). Glutamate 251 (proton acceptor) is an active-site residue. Glycine 253, cysteine 285, and glutamate 386 together coordinate NAD(+). The active-site Nucleophile is the cysteine 285. Cysteine 285 is subject to Cysteine sulfenic acid (-SOH). Lysine 456 and glycine 459 together coordinate K(+). Glutamate 463 (charge relay system) is an active-site residue.

It belongs to the aldehyde dehydrogenase family. Dimer of dimers. The cofactor is K(+).

It catalyses the reaction betaine aldehyde + NAD(+) + H2O = glycine betaine + NADH + 2 H(+). It functions in the pathway amine and polyamine biosynthesis; betaine biosynthesis via choline pathway; betaine from betaine aldehyde: step 1/1. In terms of biological role, involved in the biosynthesis of the osmoprotectant glycine betaine. Catalyzes the irreversible oxidation of betaine aldehyde to the corresponding acid. The protein is Betaine aldehyde dehydrogenase of Burkholderia mallei (strain SAVP1).